Reading from the N-terminus, the 126-residue chain is UPF0292 protein TSIB_0423 (126 aa).

One can recognise a Toprim domain in the interval 20–100; that stretch reads NGVILVEGMR…RVDTNTRREL (81 aa). Mg(2+)-binding residues include Glu-26, Asp-69, and Asp-71.

It belongs to the UPF0292 family. Requires Mg(2+) as cofactor.

The protein is UPF0292 protein TSIB_0423 of Thermococcus sibiricus (strain DSM 12597 / MM 739).